Consider the following 161-residue polypeptide: Assembly protein P7 (161 aa).

Homodimer. Part of the packaging complex composed of RDRP, P4 and P7. Interacts with RDRP.

It localises to the virion. Functionally, assembly protein part of the packaging complex that packages the viral RNA segments, replicate them into a double-stranded form and transcribe them. Required for efficient procapsid assembly. Necessary for stable packaging. May stabilize the RNA-dependent RNA polymerase (RdRP) in its position at the three-fold axis on the inner side of empty-unexpanded procapsids. Could play a role in viral RNA recognition. Seems to be involved in the regulation of plus strand synthesis (transcription) as a fidelity factor. The protein is Assembly protein P7 (P7) of Pseudomonas phage phi6 (Bacteriophage phi-6).